The chain runs to 407 residues: Chorismate synthase (407 aa).

Arg43 and Arg49 together coordinate NADP(+). FMN contacts are provided by residues 143–145, 264–265, Gly308, 323–327, and Arg349; these read RSS, QA, and KPIST.

Belongs to the chorismate synthase family. Homotetramer. FMNH2 is required as a cofactor.

The catalysed reaction is 5-O-(1-carboxyvinyl)-3-phosphoshikimate = chorismate + phosphate. Its pathway is metabolic intermediate biosynthesis; chorismate biosynthesis; chorismate from D-erythrose 4-phosphate and phosphoenolpyruvate: step 7/7. Catalyzes the anti-1,4-elimination of the C-3 phosphate and the C-6 proR hydrogen from 5-enolpyruvylshikimate-3-phosphate (EPSP) to yield chorismate, which is the branch point compound that serves as the starting substrate for the three terminal pathways of aromatic amino acid biosynthesis. This reaction introduces a second double bond into the aromatic ring system. In Corynebacterium efficiens (strain DSM 44549 / YS-314 / AJ 12310 / JCM 11189 / NBRC 100395), this protein is Chorismate synthase.